The primary structure comprises 438 residues: Coenzyme A disulfide reductase (438 aa).

Residue G8–E33 participates in FAD binding. The substrate site is built by T15, Q19, R22, S39, and N42. Residue C43 is the Nucleophile of the active site. C43 functions as the Redox-active in the catalytic mechanism. A substrate-binding site is contributed by K71. V151–N166 contacts NADP(+). T267 to D277 is an FAD binding site. H299 serves as a coordination point for substrate. An FAD-binding site is contributed by Y419. Residue K427 coordinates substrate.

This sequence belongs to the class-III pyridine nucleotide-disulfide oxidoreductase family. Homodimer. The cofactor is FAD.

The enzyme catalyses NADP(+) + 2 CoA = CoA-disulfide + NADPH + H(+). Catalyzes specifically the NADPH-dependent reduction of coenzyme A disulfide. This is Coenzyme A disulfide reductase from Staphylococcus aureus (strain bovine RF122 / ET3-1).